The primary structure comprises 108 residues: Large ribosomal subunit protein bL31B (108 aa).

The disordered stretch occupies residues 85–108 (PKPETSVEEVLPKGKKKAPAKKKK). Residues 97-108 (KGKKKAPAKKKK) are compositionally biased toward basic residues.

Belongs to the bacterial ribosomal protein bL31 family. Type B subfamily. Part of the 50S ribosomal subunit.

The protein is Large ribosomal subunit protein bL31B of Chlamydia muridarum (strain MoPn / Nigg).